A 203-amino-acid chain; its full sequence is Urease accessory protein UreG (203 aa).

11–18 (GPVGSGKT) lines the GTP pocket.

The protein belongs to the SIMIBI class G3E GTPase family. UreG subfamily. As to quaternary structure, homodimer. UreD, UreF and UreG form a complex that acts as a GTP-hydrolysis-dependent molecular chaperone, activating the urease apoprotein by helping to assemble the nickel containing metallocenter of UreC. The UreE protein probably delivers the nickel.

The protein resides in the cytoplasm. Functionally, facilitates the functional incorporation of the urease nickel metallocenter. This process requires GTP hydrolysis, probably effectuated by UreG. In Prochlorococcus marinus (strain MIT 9312), this protein is Urease accessory protein UreG.